The following is a 259-amino-acid chain: Tubulin-specific chaperone C (259 aa).

Residues 112-241 (PEVYFENDTL…DEHPILDFTW (130 aa)) enclose the C-CAP/cofactor C-like domain.

Belongs to the TBCC family.

It is found in the cytoplasm. Its subcellular location is the cytoskeleton. In terms of biological role, tubulin-folding protein; involved in the final step of the tubulin folding pathway. The polypeptide is Tubulin-specific chaperone C (cin2) (Schizosaccharomyces pombe (strain 972 / ATCC 24843) (Fission yeast)).